Here is a 375-residue protein sequence, read N- to C-terminus: MAENSLSDGGPADSVEAAKNASNTEKLTDQVMQNPQVLAALQERLDNVSHTPSSYIETLPKAVKRRINALKQLQVRCAHIEAKFYEEVHDLERKYAALYQPLFDKRREFITGDVEPTDAESAWHSENEEEDKLAGDMKNKVVIAEKEAATVEELNPKGIPEFWFTIFRNVDMLSELVQEYDEPILKHLQDIKVKFSDPGQPMSFVLEFHFEPNDYFTNPVLTKTYKMKSEPDKADPFSFEGPEIVDCDGCTIDWKKGKNVTVKTIKKKQKHKGRGTVRTITKQVPNESFFNFFSPLKASGDGESLDEDSEFTLASDFEIGHFFRERIVPRAVLYFTGEAIEDDDNFEEGEEGEEEELEGDEEGEDEDDADVNPKV.

The segment at 1–28 is disordered; that stretch reads MAENSLSDGGPADSVEAAKNASNTEKLT. Alanine 2 is modified (N-acetylalanine). Residues serine 5, serine 7, and serine 49 each carry the phosphoserine modification. At threonine 51 the chain carries Phosphothreonine. 2 positions are modified to phosphoserine: serine 53 and serine 54. Residue threonine 58 is modified to Phosphothreonine. Lysine 105 is modified (N6-acetyllysine). Serine 125 carries the post-translational modification Phosphoserine. Lysine 146 carries the post-translational modification N6-acetyllysine. A Nuclear localization signal motif is present at residues 265–271; it reads IKKKQKH. At serine 304 the chain carries Phosphoserine. Residues 339–375 are disordered; the sequence is AIEDDDNFEEGEEGEEEELEGDEEGEDEDDADVNPKV.

It belongs to the nucleosome assembly protein (NAP) family. Interacts with core (H2A, H2B, H3, H4) and linker (H1) histones. Post-translationally, polyglutamylated and polyglycylated. These 2 modifications occur exclusively on glutamate residues and result in either polyglutamate or polyglycine chains on the gamma-carboxyl group. Both modifications can coexist on the same protein on adjacent residues, and lowering polyglycylation levels increases polyglutamylation, and reciprocally. Polyglutamylated by TTLL4. Phosphorylated at the G0/G1 boundary but it is not phosphorylated in S-phase. Phosphorylated protein remains in the cytoplasm in a complex with histones during the G0/G1 transition, whereas dephosphorylation triggers its transport into the nucleus at the G1/S-boundary.

It localises to the nucleus. The protein resides in the cytoplasm. Acts as a histone chaperone in nucleosome assembly. In condensing spermatids, mediates the loading of the heterodimer composed of histones H2AB1 and H2BC1/TH2B onto the nucleosomes, thereby promoting the replacement of histones to protamine in male germ cells. This is Nucleosome assembly protein 1-like 4 (Nap1l4) from Mus musculus (Mouse).